A 261-amino-acid chain; its full sequence is Guanine nucleotide exchange factor BopE (261 aa).

Belongs to the GEF (guanine exchange factor) SopE family. Monomer. Interacts with human CDC42.

The protein resides in the secreted. Functionally, activator for both CDC42 and RAC1 by directly interacting with these Rho GTPases and acting as a guanine nucleotide exchange factor (GEF). This activation results in actin cytoskeleton rearrangements and stimulates membrane ruffling, thus promoting bacterial entry into non-phagocytic cells. This chain is Guanine nucleotide exchange factor BopE (bopE), found in Burkholderia pseudomallei (strain 1710b).